Consider the following 205-residue polypeptide: Ribosomal RNA small subunit methyltransferase G (205 aa).

S-adenosyl-L-methionine is bound by residues Gly76, Leu81, Ile127–Glu128, and Arg140.

It belongs to the methyltransferase superfamily. RNA methyltransferase RsmG family.

It localises to the cytoplasm. The enzyme catalyses guanosine(527) in 16S rRNA + S-adenosyl-L-methionine = N(7)-methylguanosine(527) in 16S rRNA + S-adenosyl-L-homocysteine. Functionally, specifically methylates the N7 position of guanine in position 527 of 16S rRNA. The chain is Ribosomal RNA small subunit methyltransferase G from Francisella tularensis subsp. tularensis (strain FSC 198).